An 89-amino-acid polypeptide reads, in one-letter code: Small ribosomal subunit protein uS15 (89 aa).

This sequence belongs to the universal ribosomal protein uS15 family. As to quaternary structure, part of the 30S ribosomal subunit. Forms a bridge to the 50S subunit in the 70S ribosome, contacting the 23S rRNA.

One of the primary rRNA binding proteins, it binds directly to 16S rRNA where it helps nucleate assembly of the platform of the 30S subunit by binding and bridging several RNA helices of the 16S rRNA. In terms of biological role, forms an intersubunit bridge (bridge B4) with the 23S rRNA of the 50S subunit in the ribosome. This Rippkaea orientalis (strain PCC 8801 / RF-1) (Cyanothece sp. (strain PCC 8801)) protein is Small ribosomal subunit protein uS15.